Consider the following 819-residue polypeptide: Metabotropic glutamate receptor-like protein O (819 aa).

A signal peptide spans 1–19 (MKKVFFLILILNCVVGALS). Over 20–394 (NKNICKISLL…FVDSYSNSIK (375 aa)) the chain is Extracellular. N-linked (GlcNAc...) asparagine glycosylation is found at N99, N185, N277, N295, N330, and N370. The helical transmembrane segment at 395 to 415 (ISILSVSIFCIFICVLGMIFI) threads the bilayer. At 416–428 (TVLRNARILKSSS) the chain is on the cytoplasmic side. The helical transmembrane segment at 429–449 (PSFLLLILFGCIVIFTGCILF) threads the bilayer. Residues 450–457 (SQPATDKT) lie on the Extracellular side of the membrane. The helical transmembrane segment at 458–478 (CQGRVWLLSIGYTIFLGSLLI) threads the bilayer. Residues 479 to 503 (KNWRVWLLFDNKKLRKRSITNWKLY) are Cytoplasmic-facing. A helical membrane pass occupies residues 504–524 (PWVAGILVVDVLILALWQGLG). Over 525-550 (DIKSESRIIGTSFYQYTNVCTNNDQG) the chain is Extracellular. A helical membrane pass occupies residues 551–571 (SIALYILLAFHGLKLLGTCFI). At 572-587 (SFKIKLVDIEEFNESK) the chain is on the cytoplasmic side. Residues 588–608 (PITTSVFIILFCIFTIILLIA) traverse the membrane as a helical segment. Topologically, residues 609–624 (PSSSSSSASSPQPIAS) are extracellular. Residues 625–645 (LETIICICSVTTTAISIGLLF) traverse the membrane as a helical segment. At 646–819 (GDKIYFITTQ…NNENEIISDT (174 aa)) the chain is on the cytoplasmic side. The segment at 674-819 (KDCDDDDDDS…NNENEIISDT (146 aa)) is disordered. Residues 695-712 (NKNKNKNRNQSEKKKRPN) show a composition bias toward basic residues. Residues 726 to 739 (ESVVFNPPSNNDLT) show a composition bias toward polar residues. Basic and acidic residues predominate over residues 748–768 (GIKEGHGHDSENNDEYEHHED). The span at 769 to 798 (EDHEYEGEGEDEDHEDEYEVENDIEQEQEQ) shows a compositional bias: acidic residues. Positions 799–808 (ESSNISISTK) are enriched in low complexity.

The protein in the N-terminal section; belongs to the BMP lipoprotein family. In the C-terminal section; belongs to the G-protein coupled receptor 3 family. GABA-B receptor subfamily.

It is found in the membrane. This chain is Metabotropic glutamate receptor-like protein O (grlO), found in Dictyostelium discoideum (Social amoeba).